A 720-amino-acid chain; its full sequence is Transcriptional regulator EFH1 (720 aa).

Polar residues-rich tracts occupy residues 1–15 and 22–35; these read MNGI…NFYN and PSSS…SSQD. Disordered regions lie at residues 1–111, 181–223, 245–336, and 365–437; these read MNGI…SSST, SFQM…HQSQ, QKEF…TIAT, and YQRQ…PQPD. Residues 71–105 show a composition bias toward low complexity; the sequence is QQNQSESQQSRQSHHLQQQQQQQQQQQQNQHNQQN. The span at 181-200 shows a compositional bias: polar residues; sequence SFQMGSVSTPDTQNSSIRSK. A compositionally biased stretch (low complexity) spans 201–223; it reads QQQQHSYQQQQPQQLSQSQHQSQ. Residues 254 to 266 are compositionally biased toward polar residues; that stretch reads GDQTLVPQTNSKL. A compositionally biased stretch (low complexity) spans 267 to 304; that stretch reads QQQISETSYSQQQQQQQSPPTPQKQQQQQHYQHQTTQP. Residues 313 to 336 show a composition bias toward polar residues; that stretch reads YSQTGGPSSSPVAGNISIPTTIAT. Residues 366-399 show a composition bias toward low complexity; the sequence is QRQQQQQQQHQQPQSQQMSQISQLSQQIPPQGSS. The span at 400–413 shows a compositional bias: polar residues; that stretch reads KNISINSTPTKSRA. Residues 414–433 are compositionally biased toward low complexity; it reads SSITTRSGRQSRSTSISSFI. Residues 446–552 form the HTH APSES-type domain; sequence KVATTRWDDE…KNIKQYFLTK (107 aa). The H-T-H motif DNA-binding region spans 480 to 501; it reads GTKLLNVIGMTRGKRDGILKTE. Residues 569–582 are compositionally biased toward basic and acidic residues; that stretch reads GMTRQREEVRREGR. Residues 569–662 are disordered; that stretch reads GMTRQREEVR…KNSESKLLET (94 aa). Positions 613-644 are enriched in acidic residues; it reads VPGDDEEEEDDDDDDDDDEEEGEQDDEEEEDG. Residues 645–654 are compositionally biased toward low complexity; the sequence is SSTSMSSSKN.

The protein belongs to the EFG1/PHD1/stuA family.

It is found in the nucleus. Functionally, transcription factor that regulates filamentous growth through repression of EFG1. Regulates the level of colonizing fungi, favoring commensalism as opposed to candidiasis. In Candida albicans (strain SC5314 / ATCC MYA-2876) (Yeast), this protein is Transcriptional regulator EFH1 (EFH1).